A 124-amino-acid chain; its full sequence is Histone H2B, embryonic (124 aa).

Positions Met-1–Lys-31 are disordered. A glycan (O-linked (GlcNAc) serine) is linked at Ser-111. Residue Lys-119 forms a Glycyl lysine isopeptide (Lys-Gly) (interchain with G-Cter in ubiquitin) linkage.

It belongs to the histone H2B family. The nucleosome is a histone octamer containing two molecules each of H2A, H2B, H3 and H4 assembled in one H3-H4 heterotetramer and two H2A-H2B heterodimers. The octamer wraps approximately 147 bp of DNA. In terms of processing, monoubiquitination of Lys-119 gives a specific tag for epigenetic transcriptional activation and is also prerequisite for histone H3 'Lys-4' and 'Lys-79' methylation. GlcNAcylation at Ser-111 promotes monoubiquitination of Lys-119. It fluctuates in response to extracellular glucose, and associates with transcribed genes.

The protein localises to the nucleus. Its subcellular location is the chromosome. Its function is as follows. Core component of nucleosome. Nucleosomes wrap and compact DNA into chromatin, limiting DNA accessibility to the cellular machineries which require DNA as a template. Histones thereby play a central role in transcription regulation, DNA repair, DNA replication and chromosomal stability. DNA accessibility is regulated via a complex set of post-translational modifications of histones, also called histone code, and nucleosome remodeling. In Strongylocentrotus purpuratus (Purple sea urchin), this protein is Histone H2B, embryonic.